Here is a 1051-residue protein sequence, read N- to C-terminus: Leucine zipper protein 1 (1051 aa).

Ala2 bears the N-acetylalanine mark. Residues 11 to 354 are a coiled coil; the sequence is ASNRHLRFKL…KLQVKKQKEL (344 aa). 4 disordered regions span residues 247-293, 374-401, 432-554, and 569-601; these read ISST…KDLN, RTKLKGHGGEVSVSKHTSREQSPQHKRE, AAKA…SQVT, and ASSQRASSEGLSKGKKAANGLETDANFPHSKAP. Over residues 254–293 the composition is skewed to basic and acidic residues; the sequence is KESRRKGSLDYLKQVENETRDKSENEKNRNQEDNKVKDLN. Phosphoserine occurs at positions 256, 261, 395, 513, 571, 575, 612, and 660. Residues 569–578 are compositionally biased toward polar residues; that stretch reads ASSQRASSEG. A disordered region spans residues 675–727; that stretch reads VNTTITPEPEPKLQPNSREKVKSRGGTRTPLFENDKNAAVENDSAKSMRSSSN. At Thr680 the chain carries Phosphothreonine. Ser691 is modified (phosphoserine). Positions 707 to 720 are enriched in basic and acidic residues; sequence ENDKNAAVENDSAK. A Phosphoserine modification is found at Ser746. Positions 789 to 799 are enriched in low complexity; sequence VTSKVTSSITI. A disordered region spans residues 789–837; the sequence is VTSKVTSSITIYPSDSSGPRAVPTEAPRERHTSTSNIQVGPPELTSVSN. The segment at 834–884 is required for interaction with FLNA; sequence SVSNHISSPLELSIHKHDITLQLTEAERVGDGSPKNRAETVVSRSSILIKP. Phosphoserine is present on Ser906. The span at 929 to 938 shows a compositional bias: basic and acidic residues; that stretch reads RDLKCSEDPP. The interval 929-1000 is disordered; that stretch reads RDLKCSEDPP…TQSSLTASEV (72 aa). Composition is skewed to polar residues over residues 946–958 and 989–999; these read EATNAYTQRSSTD and RRTQSSLTASE. Thr957 is modified (phosphothreonine). Ser993 is subject to Phosphoserine.

Component of the CERF-1 ISWI chromatin remodeling complex (also called the CECR2-containing remodeling factor (CERF) complex) at least composed of CECR2 and SMARCA1. Component of the CERF-5 ISWI chromatin remodeling complex at least composed of CECR2 and SMARCA5/SNF2H. LUZP1 is detected as part of the CERF-1 and CERF-5 complexes in embryonic stem (ES) cells where it is involved in complex stabilization but is not detected in the complexes in the testis. Interacts (via C-terminus) with LIMA1/EPLIN; both proteins restrict ciliation and may work together to regulate this process. Interacts with myosin light chain MYL9; the interaction results in inhibition of phosphorylation of MYL9 by DAPK3. Interacts with DAPK3; the interaction is likely to occur throughout the cell cycle and reduces the LUZP1-mediated suppression of MYL9 phosphorylation. Interacts with the chromosomal passenger complex (CPC); CPC kinase activity is required for localization of LUZP1 to the centromere. In terms of tissue distribution, expressed in cerebral cortex, cerebellum, hippocampus and brain stem.

The protein localises to the cytoplasm. It is found in the cytoskeleton. It localises to the microtubule organizing center. Its subcellular location is the centrosome. The protein resides in the cilium basal body. The protein localises to the midbody. It is found in the chromosome. It localises to the centromere. Its subcellular location is the spindle. The protein resides in the stress fiber. The protein localises to the nucleus. It is found in the cell projection. It localises to the dendrite. Its subcellular location is the perikaryon. The protein resides in the cell junction. The protein localises to the tight junction. Its function is as follows. F-actin cross-linking protein. Stabilizes actin and acts as a negative regulator of primary cilium formation. Positively regulates the phosphorylation of both myosin II and protein phosphatase 1 regulatory subunit PPP1R12A/MYPT1 and promotes the assembly of myosin II stacks within actin stress fibers. Inhibits the phosphorylation of myosin light chain MYL9 by DAPK3 and suppresses the constriction velocity of the contractile ring during cytokinesis. Binds to microtubules and promotes epithelial cell apical constriction by up-regulating levels of diphosphorylated myosin light chain (MLC) through microtubule-dependent inhibition of MLC dephosphorylation by myosin phosphatase. Involved in regulation of cell migration, nuclear size and centriole number, probably through regulation of the actin cytoskeleton. Component of the CERF-1 and CERF-5 chromatin remodeling complexes in embryonic stem cells where it acts to stabilize the complexes. Plays a role in embryonic brain and cardiovascular development. The chain is Leucine zipper protein 1 (Luzp1) from Rattus norvegicus (Rat).